Reading from the N-terminus, the 300-residue chain is CDAN1-interacting nuclease 1 (300 aa).

It is found in the nucleus. It localises to the cytoplasm. Functionally, may play a role in erythroid cell differentiation. The polypeptide is CDAN1-interacting nuclease 1 (cdin1) (Danio rerio (Zebrafish)).